Reading from the N-terminus, the 533-residue chain is Early growth response protein 1 (533 aa).

Disordered regions lie at residues 1-94 (MAAA…EQPY) and 161-237 (MTNP…PPPA). Gly residues predominate over residues 68–77 (SGGGGGGGSN). Low complexity predominate over residues 164 to 189 (PPTSSSSAPSPAASSSSSASQSPPLS). A Glycyl lysine isopeptide (Lys-Gly) (interchain with G-Cter in SUMO2) cross-link involves residue K303. A disordered region spans residues 316–336 (PSRMRKYPNRPSKTPPHERPY). C2H2-type zinc fingers lie at residues 336-360 (YACPVESCDRRFSRSDELTRHIRIH), 366-388 (FQCRICMRNFSRSDHLTTHIRTH), and 394-416 (FACDICGRKFARSDERKRHTKIH). The tract at residues 407–478 (DERKRHTKIH…SSTYPSPAHS (72 aa)) is disordered. Over residues 411-421 (RHTKIHLRQKD) the composition is skewed to basic residues. Over residues 427–475 (SVVASPAASSLSSYPSPVATSYPSPATTSFPSPVPTSYSSPGSSTYPSP) the composition is skewed to low complexity.

Belongs to the EGR C2H2-type zinc-finger protein family. In terms of assembly, interacts with SNAI1 and SP1 upon 12-O-tetradecanoylphorbol-13-acetate (TPA) induction. In terms of tissue distribution, detected in lung vasculature and in mononuclear phagocytes. Detected in liver (at protein level). Expressed in the liver in a circadian manner.

It is found in the nucleus. The protein resides in the cytoplasm. In terms of biological role, transcriptional regulator. Recognizes and binds to the DNA sequence 5'-GCG(T/G)GGGCG-3'(EGR-site) in the promoter region of target genes. Binds double-stranded target DNA, irrespective of the cytosine methylation status. Regulates the transcription of numerous target genes, and thereby plays an important role in regulating the response to growth factors, DNA damage, and ischemia. Plays a role in the regulation of cell survival, proliferation and cell death. Activates expression of p53/TP53 and TGFB1, and thereby helps prevent tumor formation. Required for normal progress through mitosis and normal proliferation of hepatocytes after partial hepatectomy. Mediates responses to ischemia and hypoxia; regulates the expression of proteins such as IL1B and CXCL2 that are involved in inflammatory processes and development of tissue damage after ischemia. Regulates biosynthesis of luteinizing hormone (LHB) in the pituitary. Regulates the amplitude of the expression rhythms of clock genes: BMAL1, PER2 and NR1D1 in the liver via the activation of PER1 (clock repressor) transcription. Regulates the rhythmic expression of core-clock gene BMAL1 in the suprachiasmatic nucleus (SCN). The polypeptide is Early growth response protein 1 (Egr1) (Mus musculus (Mouse)).